Reading from the N-terminus, the 289-residue chain is Probable phosphoribulokinase (289 aa).

Position 12-20 (12-20 (GSSGAGTTT)) interacts with ATP.

Belongs to the phosphoribulokinase family.

It carries out the reaction D-ribulose 5-phosphate + ATP = D-ribulose 1,5-bisphosphate + ADP + H(+). The protein is Probable phosphoribulokinase (prkB) of Escherichia coli (strain K12).